The sequence spans 559 residues: YTH domain-containing family protein 1 (559 aa).

A disordered region spans residues 1–49 (MSATSVDPQRTKGQDNKVQNGSLHQKDAVHDNDFEPYLSGQSNPSNSYP). Ser2 is modified (N-acetylserine). Residues 24–33 (HQKDAVHDND) show a composition bias toward basic and acidic residues. Position 182 is a phosphoserine (Ser182). The tract at residues 239–365 (SKPAKPQPKM…PTSAPSVESH (127 aa)) is disordered. Low complexity-rich tracts occupy residues 279-305 (PAPKASAPQQTPSPQAAPQPQQVAQPL) and 314-326 (QPQYQSPQQPLQP). Over residues 343 to 361 (GANSDSNSVGNAQPTSAPS) the composition is skewed to polar residues. Residues 389–523 (GRVFIIKSYS…EKAKQVLKII (135 aa)) form the YTH domain. Residues 395–397 (KSY), Asp401, 411–412 (WC), Asn441, Trp465, and Trp470 each bind RNA.

This sequence belongs to the YTHDF family. YTHDF1 subfamily. As to quaternary structure, interacts with CNOT1; promoting recruitment of the CCR4-NOT complex. Interacts with ribosomes. Interacts with eIF3 (EIF3A or EIF3B). Interacts with YTHDF3. Ubiquitinated by the CUL7-FBXW8 E3 ligase complex leading to degradation. Deubiquitinated and stabilized by USP5 by removing 'Lys-11'-linked polyubiquitination. As to expression, in brain, preferentially expressed in the hippocampus.

The protein localises to the cytoplasm. Its subcellular location is the P-body. It is found in the stress granule. Functionally, specifically recognizes and binds N6-methyladenosine (m6A)-containing mRNAs, and regulates their stability. M6A is a modification present at internal sites of mRNAs and some non-coding RNAs and plays a role in mRNA stability and processing. Acts as a regulator of mRNA stability by promoting degradation of m6A-containing mRNAs via interaction with the CCR4-NOT complex. The YTHDF paralogs (YTHDF1, YTHDF2 and YTHDF3) share m6A-containing mRNAs targets and act redundantly to mediate mRNA degradation and cellular differentiation. Required to facilitate learning and memory formation in the hippocampus by binding to m6A-containing neuronal mRNAs. Acts as a regulator of axon guidance by binding to m6A-containing ROBO3 transcripts. Acts as a negative regulator of antigen cross-presentation in myeloid dendritic cells. In the context of tumorigenesis, negative regulation of antigen cross-presentation limits the anti-tumor response by reducing efficiency of tumor-antigen cross-presentation. Promotes formation of phase-separated membraneless compartments, such as P-bodies or stress granules, by undergoing liquid-liquid phase separation upon binding to mRNAs containing multiple m6A-modified residues: polymethylated mRNAs act as a multivalent scaffold for the binding of YTHDF proteins, juxtaposing their disordered regions and thereby leading to phase separation. The resulting mRNA-YTHDF complexes then partition into different endogenous phase-separated membraneless compartments, such as P-bodies, stress granules or neuronal RNA granules. This chain is YTH domain-containing family protein 1, found in Mus musculus (Mouse).